Reading from the N-terminus, the 494-residue chain is Ketol-acid reductoisomerase (NADP(+)) (494 aa).

One can recognise a KARI N-terminal Rossmann domain in the interval 14–208; the sequence is LEQLGKCRFM…GGHRAGVLQS (195 aa). NADP(+)-binding positions include 45–48, arginine 68, arginine 76, serine 78, and 108–110; these read CGAQ and DKQ. The active site involves histidine 132. Glycine 158 lines the NADP(+) pocket. KARI C-terminal knotted domains follow at residues 209–344 and 345–487; these read SFVA…NAPA and FDGA…MKDM. Mg(2+) is bound by residues aspartate 217, glutamate 221, glutamate 389, and glutamate 393. Serine 414 lines the substrate pocket.

The protein belongs to the ketol-acid reductoisomerase family. Requires Mg(2+) as cofactor.

The catalysed reaction is (2R)-2,3-dihydroxy-3-methylbutanoate + NADP(+) = (2S)-2-acetolactate + NADPH + H(+). It carries out the reaction (2R,3R)-2,3-dihydroxy-3-methylpentanoate + NADP(+) = (S)-2-ethyl-2-hydroxy-3-oxobutanoate + NADPH + H(+). It participates in amino-acid biosynthesis; L-isoleucine biosynthesis; L-isoleucine from 2-oxobutanoate: step 2/4. The protein operates within amino-acid biosynthesis; L-valine biosynthesis; L-valine from pyruvate: step 2/4. Functionally, involved in the biosynthesis of branched-chain amino acids (BCAA). Catalyzes an alkyl-migration followed by a ketol-acid reduction of (S)-2-acetolactate (S2AL) to yield (R)-2,3-dihydroxy-isovalerate. In the isomerase reaction, S2AL is rearranged via a Mg-dependent methyl migration to produce 3-hydroxy-3-methyl-2-ketobutyrate (HMKB). In the reductase reaction, this 2-ketoacid undergoes a metal-dependent reduction by NADPH to yield (R)-2,3-dihydroxy-isovalerate. The sequence is that of Ketol-acid reductoisomerase (NADP(+)) from Tolumonas auensis (strain DSM 9187 / NBRC 110442 / TA 4).